A 41-amino-acid polypeptide reads, in one-letter code: Large ribosomal subunit protein bL36 (41 aa).

It belongs to the bacterial ribosomal protein bL36 family.

In Rhodopseudomonas palustris (strain BisB5), this protein is Large ribosomal subunit protein bL36.